Reading from the N-terminus, the 236-residue chain is uncharacterized protein (236 aa).

An N-terminal signal peptide occupies residues 1–24 (MRKKHFNMILKLALISSLLALAAS). N-linked (GlcNAc...) asparagine glycosylation is found at Asn-59, Asn-171, and Asn-197.

Its subcellular location is the secreted. This is an uncharacterized protein from Caenorhabditis elegans.